A 55-amino-acid polypeptide reads, in one-letter code: Conotoxin Cal14.14 (55 aa).

The N-terminal stretch at 1–20 (MFRLGVFLLTFLLLVSMATS) is a signal peptide. Intrachain disulfides connect Cys34/Cys48 and Cys38/Cys52.

Expressed by the venom duct.

The protein localises to the secreted. Its function is as follows. Probable neurotoxin. The polypeptide is Conotoxin Cal14.14 (Californiconus californicus (California cone)).